Here is a 416-residue protein sequence, read N- to C-terminus: Probable sarcosine oxidase (416 aa).

Position 10 to 40 (10 to 40 (DVIVVGAGVMGSSAAYQLAKRGQKTLLLEQF)) interacts with FAD. Cysteine 325 is modified (S-8alpha-FAD cysteine).

It belongs to the MSOX/MTOX family. Requires FAD as cofactor.

It catalyses the reaction sarcosine + O2 + H2O = formaldehyde + glycine + H2O2. This Arabidopsis thaliana (Mouse-ear cress) protein is Probable sarcosine oxidase.